Consider the following 85-residue polypeptide: Makatoxin-2 (85 aa).

Residues 1-19 form the signal peptide; the sequence is MNYLIVISFALLLMTSVES. One can recognise an LCN-type CS-alpha/beta domain in the interval 21–83; that stretch reads RDAYIADSEN…VPIRIPGPCR (63 aa). 4 disulfides stabilise this stretch: Cys31-Cys82, Cys35-Cys55, Cys41-Cys65, and Cys45-Cys67.

The protein belongs to the long (4 C-C) scorpion toxin superfamily. Sodium channel inhibitor family. Alpha subfamily. Expressed by the venom gland.

It localises to the secreted. This protein markedly relaxes the rat carbachol-precontracted anococcygeus muscle. This relaxation is inhibited by the inhibitor of nitric oxide (NO) synthase, N-nitro-L-arginine methyl ester (L-NAME), suggesting that the response induced by this protein is NO-mediated. The chain is Makatoxin-2 from Olivierus martensii (Manchurian scorpion).